The primary structure comprises 285 residues: tRNA-cytidine(32) 2-sulfurtransferase (285 aa).

A PP-loop motif motif is present at residues Ser49–Ser54. [4Fe-4S] cluster is bound by residues Cys124, Cys127, and Cys215.

This sequence belongs to the TtcA family. In terms of assembly, homodimer. Mg(2+) serves as cofactor. The cofactor is [4Fe-4S] cluster.

The protein resides in the cytoplasm. It carries out the reaction cytidine(32) in tRNA + S-sulfanyl-L-cysteinyl-[cysteine desulfurase] + AH2 + ATP = 2-thiocytidine(32) in tRNA + L-cysteinyl-[cysteine desulfurase] + A + AMP + diphosphate + H(+). The protein operates within tRNA modification. Catalyzes the ATP-dependent 2-thiolation of cytidine in position 32 of tRNA, to form 2-thiocytidine (s(2)C32). The sulfur atoms are provided by the cysteine/cysteine desulfurase (IscS) system. This Hahella chejuensis (strain KCTC 2396) protein is tRNA-cytidine(32) 2-sulfurtransferase.